We begin with the raw amino-acid sequence, 607 residues long: Aspartate--tRNA(Asp/Asn) ligase (607 aa).

An L-aspartate-binding site is contributed by E194. Residues 218 to 221 (QLFK) are aspartate. Residue R240 participates in L-aspartate binding. ATP is bound by residues 240 to 242 (RDE) and Q249. L-aspartate is bound at residue H468. Residue E502 coordinates ATP. Residue R509 participates in L-aspartate binding. An ATP-binding site is contributed by 554–557 (GLDR).

This sequence belongs to the class-II aminoacyl-tRNA synthetase family. Type 1 subfamily. In terms of assembly, homodimer.

The protein localises to the cytoplasm. The catalysed reaction is tRNA(Asx) + L-aspartate + ATP = L-aspartyl-tRNA(Asx) + AMP + diphosphate. Its function is as follows. Aspartyl-tRNA synthetase with relaxed tRNA specificity since it is able to aspartylate not only its cognate tRNA(Asp) but also tRNA(Asn). Reaction proceeds in two steps: L-aspartate is first activated by ATP to form Asp-AMP and then transferred to the acceptor end of tRNA(Asp/Asn). This chain is Aspartate--tRNA(Asp/Asn) ligase, found in Desulfotalea psychrophila (strain LSv54 / DSM 12343).